A 159-amino-acid polypeptide reads, in one-letter code: Crossover junction endodeoxyribonuclease RuvC (159 aa).

Residues Asp-7, Glu-66, and Asp-139 contribute to the active site. Asp-7, Glu-66, and Asp-139 together coordinate Mg(2+).

The protein belongs to the RuvC family. In terms of assembly, homodimer which binds Holliday junction (HJ) DNA. The HJ becomes 2-fold symmetrical on binding to RuvC with unstacked arms; it has a different conformation from HJ DNA in complex with RuvA. In the full resolvosome a probable DNA-RuvA(4)-RuvB(12)-RuvC(2) complex forms which resolves the HJ. It depends on Mg(2+) as a cofactor.

The protein resides in the cytoplasm. It catalyses the reaction Endonucleolytic cleavage at a junction such as a reciprocal single-stranded crossover between two homologous DNA duplexes (Holliday junction).. The RuvA-RuvB-RuvC complex processes Holliday junction (HJ) DNA during genetic recombination and DNA repair. Endonuclease that resolves HJ intermediates. Cleaves cruciform DNA by making single-stranded nicks across the HJ at symmetrical positions within the homologous arms, yielding a 5'-phosphate and a 3'-hydroxyl group; requires a central core of homology in the junction. The consensus cleavage sequence is 5'-(A/T)TT(C/G)-3'. Cleavage occurs on the 3'-side of the TT dinucleotide at the point of strand exchange. HJ branch migration catalyzed by RuvA-RuvB allows RuvC to scan DNA until it finds its consensus sequence, where it cleaves and resolves the cruciform DNA. This chain is Crossover junction endodeoxyribonuclease RuvC, found in Sulfurovum sp. (strain NBC37-1).